Reading from the N-terminus, the 338-residue chain is Lipoyl synthase (338 aa).

The disordered stretch occupies residues 1-24; that stretch reads MTTVQEAVPNLIPTQDATPRPAPK. [4Fe-4S] cluster is bound by residues cysteine 84, cysteine 89, cysteine 95, cysteine 110, cysteine 114, cysteine 117, and serine 324. The 218-residue stretch at 96–313 folds into the Radical SAM core domain; it reads FSGGTATFMI…AEEGYKMGFK (218 aa).

Belongs to the radical SAM superfamily. Lipoyl synthase family. It depends on [4Fe-4S] cluster as a cofactor.

It is found in the cytoplasm. The enzyme catalyses [[Fe-S] cluster scaffold protein carrying a second [4Fe-4S](2+) cluster] + N(6)-octanoyl-L-lysyl-[protein] + 2 oxidized [2Fe-2S]-[ferredoxin] + 2 S-adenosyl-L-methionine + 4 H(+) = [[Fe-S] cluster scaffold protein] + N(6)-[(R)-dihydrolipoyl]-L-lysyl-[protein] + 4 Fe(3+) + 2 hydrogen sulfide + 2 5'-deoxyadenosine + 2 L-methionine + 2 reduced [2Fe-2S]-[ferredoxin]. It functions in the pathway protein modification; protein lipoylation via endogenous pathway; protein N(6)-(lipoyl)lysine from octanoyl-[acyl-carrier-protein]: step 2/2. Its function is as follows. Catalyzes the radical-mediated insertion of two sulfur atoms into the C-6 and C-8 positions of the octanoyl moiety bound to the lipoyl domains of lipoate-dependent enzymes, thereby converting the octanoylated domains into lipoylated derivatives. This chain is Lipoyl synthase, found in Pseudomonas putida (strain ATCC 700007 / DSM 6899 / JCM 31910 / BCRC 17059 / LMG 24140 / F1).